The sequence spans 210 residues: SAP domain-containing ribonucleoprotein (210 aa).

N-acetylalanine is present on alanine 2. The SAP domain maps to 8–42; sequence LHKLKLAELKQECLARGLETKGIKQDLINRLQAYL. N6-acetyllysine is present on lysine 10. The span at 45–64 shows a compositional bias: acidic residues; that stretch reads HAEEEANEEDVLGDETEEEE. Residues 45-87 form a disordered region; it reads HAEEEANEEDVLGDETEEEEPKPIELPVKEEEPPEKVVDMASE. Residues 65–87 are compositionally biased toward basic and acidic residues; sequence PKPIELPVKEEEPPEKVVDMASE. Position 142 is an N6-acetyllysine (lysine 142). A disordered region spans residues 161 to 210; it reads VSSISRKSEDDEKLKKRKERFGIVTSSAGTGTTEDTEAKKRKRAERFGIA. A Phosphoserine modification is found at serine 163. The span at 184 to 193 shows a compositional bias: polar residues; sequence VTSSAGTGTT.

Belongs to the SAP domain-containing ribonucleoprotein family. In terms of assembly, interacts with DDX39A. Interacts with FUS. Interacts (via the C-terminal domain) with DDX39B; the interaction is direct and facilitates RNA binding of DDX39B. Component of the transcription/export (TREX) complex at least composed of ALYREF/THOC4, DDX39B, SARNP/CIP29, CHTOP and the THO subcomplex; TREX seems to have dynamic structure involving ATP-dependent remodeling; in the complex interacts directly with DDX39B in a ATP-dependent manner which bridges it to ALYREF/THOC4.

The protein resides in the nucleus. It localises to the nucleus speckle. Binds both single-stranded and double-stranded DNA with higher affinity for the single-stranded form. Specifically binds to scaffold/matrix attachment region DNA. Also binds single-stranded RNA. Enhances RNA unwinding activity of DDX39A. May participate in important transcriptional or translational control of cell growth, metabolism and carcinogenesis. Component of the TREX complex which is thought to couple mRNA transcription, processing and nuclear export, and specifically associates with spliced mRNA and not with unspliced pre-mRNA. The TREX complex is recruited to spliced mRNAs by a transcription-independent mechanism, binds to mRNA upstream of the exon-junction complex (EJC) and is recruited in a splicing- and cap-dependent manner to a region near the 5' end of the mRNA where it functions in mRNA export to the cytoplasm via the TAP/NXF1 pathway. Associates with DDX39B, which facilitates RNA binding of DDX39B and likely plays a role in mRNA export. This Rattus norvegicus (Rat) protein is SAP domain-containing ribonucleoprotein (Sarnp).